Here is a 560-residue protein sequence, read N- to C-terminus: MAKQIKFDSDARSALQEGVDQMAKAVKVTLGPKGRNVVLEKSFGAPTITKDGVTVAKEIELEERLPNIGAQVLKEAASKTNDDAGDGTTTATVLAQSVINAGMKSVTSGANPMDVKRGITAAAEEVVTHLRNQSDPVEGKDRISQVATISANNDDAIGDLIADAFERVGQDGVITVEEARGIETYLDVVEGMQFDRGYLSPYFVTDSEEMEAVLEDAYILIYDDEVGNMQDLLPILEKVSQTSNPLLIIAEDVEGEALATLVVNKMRGTLKVSAVKAPGFGDRRQSMLEDIAVLTGGTVISEEKGYRLENATLDYLGQADRVTIDQDNTTIVGGEGSEEEIEARVNQIRQQIANSTSDYDQEKLQERLAKLAGGVAVLNVGAATEPEMKAQKALVEDALSATRAAVDEGVLPGGGVAYLRALESIEEVEVENEDQEIGVSIVREALEAPLRQIAENTGHEGSIVVQKVKDGEGDFGFNARTEEYGDLLDQGVLDPTKVTRSALENAASVGGMLLTTEAVIADLEDEDDDDGGGGGGGGMPAGGAGGMGGMGGMGGMGGMM.

ATP contacts are provided by residues 29 to 32 (TLGP), lysine 50, 86 to 90 (DGTTT), glycine 414, and aspartate 494. The tract at residues 524–546 (EDEDDDDGGGGGGGGMPAGGAGG) is disordered. Residues 532 to 546 (GGGGGGGMPAGGAGG) are compositionally biased toward gly residues.

Belongs to the chaperonin (HSP60) family. Forms a cylinder of 14 subunits composed of two heptameric rings stacked back-to-back. Interacts with the co-chaperonin GroES.

It is found in the cytoplasm. It carries out the reaction ATP + H2O + a folded polypeptide = ADP + phosphate + an unfolded polypeptide.. Its function is as follows. Together with its co-chaperonin GroES, plays an essential role in assisting protein folding. The GroEL-GroES system forms a nano-cage that allows encapsulation of the non-native substrate proteins and provides a physical environment optimized to promote and accelerate protein folding. The protein is Chaperonin GroEL 2 of Salinibacter ruber (strain DSM 13855 / M31).